A 40-amino-acid chain; its full sequence is Photosystem II reaction center protein J (40 aa).

Residues 8–28 (IPLWIIGTVAGILVIGLVGIF) form a helical membrane-spanning segment.

It belongs to the PsbJ family. As to quaternary structure, PSII is composed of 1 copy each of membrane proteins PsbA, PsbB, PsbC, PsbD, PsbE, PsbF, PsbH, PsbI, PsbJ, PsbK, PsbL, PsbM, PsbT, PsbX, PsbY, PsbZ, Psb30/Ycf12, at least 3 peripheral proteins of the oxygen-evolving complex and a large number of cofactors. It forms dimeric complexes.

The protein localises to the plastid. Its subcellular location is the chloroplast thylakoid membrane. One of the components of the core complex of photosystem II (PSII). PSII is a light-driven water:plastoquinone oxidoreductase that uses light energy to abstract electrons from H(2)O, generating O(2) and a proton gradient subsequently used for ATP formation. It consists of a core antenna complex that captures photons, and an electron transfer chain that converts photonic excitation into a charge separation. In Spinacia oleracea (Spinach), this protein is Photosystem II reaction center protein J.